The chain runs to 664 residues: Macrolide export ATP-binding/permease protein MacB (664 aa).

Residues 8 to 245 (LELVDVHRTY…AGPSVPLTLD (238 aa)) form the ABC transporter domain. 44–51 (GSSGSGKS) provides a ligand contact to ATP. 4 helical membrane passes run 283–303 (LLSV…MALG), 543–563 (GAIA…IMLV), 602–622 (IIGI…AGWA), and 627–647 (IVSI…FGLW).

It belongs to the ABC transporter superfamily. Macrolide exporter (TC 3.A.1.122) family. As to quaternary structure, homodimer.

The protein localises to the cell inner membrane. Non-canonical ABC transporter that contains transmembrane domains (TMD), which form a pore in the inner membrane, and an ATP-binding domain (NBD), which is responsible for energy generation. Confers resistance against macrolides. This chain is Macrolide export ATP-binding/permease protein MacB, found in Chlorobium luteolum (strain DSM 273 / BCRC 81028 / 2530) (Pelodictyon luteolum).